A 290-amino-acid polypeptide reads, in one-letter code: Proteasome subunit beta (290 aa).

A propeptide spans 1–58 (MTTSGGLTGPGAFGRLPQPFHQPGITSFVEFLALQAPDLLPGRLQMPAGGQPPEVPHG) (removed in mature form; by autocatalysis). The active-site Nucleophile is Thr59.

Belongs to the peptidase T1B family. In terms of assembly, the 20S proteasome core is composed of 14 alpha and 14 beta subunits that assemble into four stacked heptameric rings, resulting in a barrel-shaped structure. The two inner rings, each composed of seven catalytic beta subunits, are sandwiched by two outer rings, each composed of seven alpha subunits. The catalytic chamber with the active sites is on the inside of the barrel. Has a gated structure, the ends of the cylinder being occluded by the N-termini of the alpha-subunits. Is capped by the proteasome-associated ATPase, ARC.

It is found in the cytoplasm. The catalysed reaction is Cleavage of peptide bonds with very broad specificity.. It functions in the pathway protein degradation; proteasomal Pup-dependent pathway. With respect to regulation, the formation of the proteasomal ATPase ARC-20S proteasome complex, likely via the docking of the C-termini of ARC into the intersubunit pockets in the alpha-rings, may trigger opening of the gate for substrate entry. Interconversion between the open-gate and close-gate conformations leads to a dynamic regulation of the 20S proteasome proteolysis activity. Component of the proteasome core, a large protease complex with broad specificity involved in protein degradation. This is Proteasome subunit beta from Acidothermus cellulolyticus (strain ATCC 43068 / DSM 8971 / 11B).